Consider the following 89-residue polypeptide: Small ribosomal subunit protein uS15 (89 aa).

Positions 1–25 (MSLSAEQKGEIVKKHARTASDTGSP) are disordered.

This sequence belongs to the universal ribosomal protein uS15 family. In terms of assembly, part of the 30S ribosomal subunit. Forms a bridge to the 50S subunit in the 70S ribosome, contacting the 23S rRNA.

One of the primary rRNA binding proteins, it binds directly to 16S rRNA where it helps nucleate assembly of the platform of the 30S subunit by binding and bridging several RNA helices of the 16S rRNA. Its function is as follows. Forms an intersubunit bridge (bridge B4) with the 23S rRNA of the 50S subunit in the ribosome. The protein is Small ribosomal subunit protein uS15 of Alkalilimnicola ehrlichii (strain ATCC BAA-1101 / DSM 17681 / MLHE-1).